We begin with the raw amino-acid sequence, 51 residues long: uncharacterized protein (51 aa).

This is an uncharacterized protein from Borreliella burgdorferi (strain ATCC 35210 / DSM 4680 / CIP 102532 / B31) (Borrelia burgdorferi).